Consider the following 141-residue polypeptide: 3-hydroxyacyl-[acyl-carrier-protein] dehydratase FabZ (141 aa).

Residue histidine 48 is part of the active site.

It belongs to the thioester dehydratase family. FabZ subfamily.

Its subcellular location is the cytoplasm. The enzyme catalyses a (3R)-hydroxyacyl-[ACP] = a (2E)-enoyl-[ACP] + H2O. Its function is as follows. Involved in unsaturated fatty acids biosynthesis. Catalyzes the dehydration of short chain beta-hydroxyacyl-ACPs and long chain saturated and unsaturated beta-hydroxyacyl-ACPs. In Herpetosiphon aurantiacus (strain ATCC 23779 / DSM 785 / 114-95), this protein is 3-hydroxyacyl-[acyl-carrier-protein] dehydratase FabZ.